A 254-amino-acid chain; its full sequence is Attacin-A (254 aa).

The signal sequence occupies residues 1–18 (MFTYKLILGLVLVVSASA). Residues 19 to 62 (RYLVFEDLEGESYLVPNQAEDEQVLEGEPFYENAVQLASPRVRR) constitute a propeptide that is removed on maturation.

Belongs to the attacin/sarcotoxin-2 family.

It is found in the secreted. Its function is as follows. Hemolymph antibacterial protein. The chain is Attacin-A from Trichoplusia ni (Cabbage looper).